A 519-amino-acid chain; its full sequence is ATP synthase subunit alpha, mitochondrial (519 aa).

188–195 (GDRQTGKS) contributes to the ATP binding site.

The protein belongs to the ATPase alpha/beta chains family. F-type ATPases have 2 components, CF(1) - the catalytic core - and CF(0) - the membrane proton channel. CF(1) has five subunits: alpha(3), beta(3), gamma(1), delta(1), epsilon(1). CF(0) has three main subunits: a, b and c.

The protein localises to the mitochondrion. Its subcellular location is the mitochondrion inner membrane. In terms of biological role, mitochondrial membrane ATP synthase (F(1)F(0) ATP synthase or Complex V) produces ATP from ADP in the presence of a proton gradient across the membrane which is generated by electron transport complexes of the respiratory chain. F-type ATPases consist of two structural domains, F(1) - containing the extramembraneous catalytic core, and F(0) - containing the membrane proton channel, linked together by a central stalk and a peripheral stalk. During catalysis, ATP synthesis in the catalytic domain of F(1) is coupled via a rotary mechanism of the central stalk subunits to proton translocation. Subunits alpha and beta form the catalytic core in F(1). Rotation of the central stalk against the surrounding alpha(3)beta(3) subunits leads to hydrolysis of ATP in three separate catalytic sites on the beta subunits. Subunit alpha does not bear the catalytic high-affinity ATP-binding sites. The chain is ATP synthase subunit alpha, mitochondrial (atp1) from Dictyostelium citrinum (Slime mold).